Here is a 500-residue protein sequence, read N- to C-terminus: Cytochrome P450 71B37 (500 aa).

A helical membrane pass occupies residues 2–22 (ATIWFLPLLFLSCLLLAALRL). Residue C440 participates in heme binding.

The protein belongs to the cytochrome P450 family. Heme is required as a cofactor.

It localises to the membrane. This chain is Cytochrome P450 71B37 (CYP71B37), found in Arabidopsis thaliana (Mouse-ear cress).